Reading from the N-terminus, the 198-residue chain is Recombination protein RecR (198 aa).

A C4-type zinc finger spans residues 57–72 (CSVCGHITDQDPCYIC). In terms of domain architecture, Toprim spans 80–175 (SVICVVQDPK…KLSRIAHGLP (96 aa)).

The protein belongs to the RecR family.

May play a role in DNA repair. It seems to be involved in an RecBC-independent recombinational process of DNA repair. It may act with RecF and RecO. The sequence is that of Recombination protein RecR from Bacillus pumilus (strain SAFR-032).